The chain runs to 131 residues: MRRTFFKAKIHRATVTHADLEYEGSVSIDEDLLEAAGIWEYEAVHVWNITRGTRLQTYAIKGERGSGIICINGAAAHLNRPGDMVILATFAELEEAEARDFKPTVVLVDRQNKIVAKDAVEVPGPARRVTA.

Serine 25 acts as the Schiff-base intermediate with substrate; via pyruvic acid in catalysis. Serine 25 is modified (pyruvic acid (Ser)). Threonine 57 provides a ligand contact to substrate. Tyrosine 58 serves as the catalytic Proton donor. 73-75 (GAA) contacts substrate.

The protein belongs to the PanD family. Heterooctamer of four alpha and four beta subunits. The cofactor is pyruvate. Post-translationally, is synthesized initially as an inactive proenzyme, which is activated by self-cleavage at a specific serine bond to produce a beta-subunit with a hydroxyl group at its C-terminus and an alpha-subunit with a pyruvoyl group at its N-terminus.

Its subcellular location is the cytoplasm. It catalyses the reaction L-aspartate + H(+) = beta-alanine + CO2. It participates in cofactor biosynthesis; (R)-pantothenate biosynthesis; beta-alanine from L-aspartate: step 1/1. Its function is as follows. Catalyzes the pyruvoyl-dependent decarboxylation of aspartate to produce beta-alanine. The chain is Aspartate 1-decarboxylase from Anaeromyxobacter dehalogenans (strain 2CP-C).